The chain runs to 360 residues: Histidinol-phosphate aminotransferase (360 aa).

Position 222 is an N6-(pyridoxal phosphate)lysine (Lys-222).

The protein belongs to the class-II pyridoxal-phosphate-dependent aminotransferase family. Histidinol-phosphate aminotransferase subfamily. Homodimer. Requires pyridoxal 5'-phosphate as cofactor.

It catalyses the reaction L-histidinol phosphate + 2-oxoglutarate = 3-(imidazol-4-yl)-2-oxopropyl phosphate + L-glutamate. Its pathway is amino-acid biosynthesis; L-histidine biosynthesis; L-histidine from 5-phospho-alpha-D-ribose 1-diphosphate: step 7/9. The sequence is that of Histidinol-phosphate aminotransferase from Listeria monocytogenes serotype 4b (strain CLIP80459).